The chain runs to 171 residues: Large ribosomal subunit protein bL9 (171 aa).

It belongs to the bacterial ribosomal protein bL9 family.

Its function is as follows. Binds to the 23S rRNA. This is Large ribosomal subunit protein bL9 from Orientia tsutsugamushi (strain Ikeda) (Rickettsia tsutsugamushi).